Consider the following 657-residue polypeptide: Regulator of MON1-CCZ1 complex (657 aa).

In terms of domain architecture, Mic1 spans 471 to 637 (KKEMPHKFVI…NFTPGEHCEE (167 aa)).

Belongs to the RMC1 family. Found in a complex with RMC1, CCZ1 MON1A and MON1B.

It is found in the lysosome membrane. It localises to the late endosome membrane. In terms of biological role, component of the CCZ1-MON1 RAB7A guanine exchange factor (GEF). Acts as a positive regulator of CCZ1-MON1A/B function necessary for endosomal/autophagic flux and efficient RAB7A localization. The protein is Regulator of MON1-CCZ1 complex of Homo sapiens (Human).